Reading from the N-terminus, the 168-residue chain is MTERAVLAGGCFWGMQDLIRKLPGIESTRVGYTGGEVPNATYRNHGNHAEGIEILFDPEKTSYRQLLEFFFQIHDPTTPNRQGNDRGPSYRSAIYYVDEEQKQIALDTIADVNASGLWPGKVVTEVEPVSDFWEAEPEHQDYLEKVPNGYTCHFPRPNWVLPKRAATE.

Residue cysteine 11 is part of the active site.

It belongs to the MsrA Met sulfoxide reductase family.

The catalysed reaction is L-methionyl-[protein] + [thioredoxin]-disulfide + H2O = L-methionyl-(S)-S-oxide-[protein] + [thioredoxin]-dithiol. It catalyses the reaction [thioredoxin]-disulfide + L-methionine + H2O = L-methionine (S)-S-oxide + [thioredoxin]-dithiol. Functionally, has an important function as a repair enzyme for proteins that have been inactivated by oxidation. Catalyzes the reversible oxidation-reduction of methionine sulfoxide in proteins to methionine. This is Peptide methionine sulfoxide reductase MsrA 2 from Rhodopirellula baltica (strain DSM 10527 / NCIMB 13988 / SH1).